The following is a 363-amino-acid chain: Small ribosomal subunit biogenesis GTPase RsgA (363 aa).

In terms of domain architecture, CP-type G spans 112–268; the sequence is HQQVIAANID…LIDTPGMREL (157 aa). Residues 157-160 and 210-218 contribute to the GTP site; these read TKAD and GSSGAGKST. Zn(2+)-binding residues include cysteine 291, cysteine 296, histidine 298, and cysteine 304. A disordered region spans residues 340 to 363; the sequence is RVAQNNRGKGSGKRPASIDRPGRR.

The protein belongs to the TRAFAC class YlqF/YawG GTPase family. RsgA subfamily. As to quaternary structure, monomer. Associates with 30S ribosomal subunit, binds 16S rRNA. Requires Zn(2+) as cofactor.

It localises to the cytoplasm. Its function is as follows. One of several proteins that assist in the late maturation steps of the functional core of the 30S ribosomal subunit. Helps release RbfA from mature subunits. May play a role in the assembly of ribosomal proteins into the subunit. Circularly permuted GTPase that catalyzes slow GTP hydrolysis, GTPase activity is stimulated by the 30S ribosomal subunit. The sequence is that of Small ribosomal subunit biogenesis GTPase RsgA from Xanthomonas oryzae pv. oryzae (strain MAFF 311018).